A 475-amino-acid chain; its full sequence is Ankyrin repeat, SAM and basic leucine zipper domain-containing protein 1 (475 aa).

Positions 1-25 (MAAGALRGLPVAGGGESSESEDDGW) are disordered. 3 positions are modified to phosphoserine: Ser17, Ser18, and Ser20. 6 ANK repeats span residues 45–74 (EKKE…SVDS), 78–107 (YGWT…NASF), 110–144 (DKQT…DPNV), 148–177 (RLMT…EVNT), 181–210 (NGYT…NKML), and 214–243 (DGKM…PLEG). One can recognise an SAM domain in the interval 272–334 (SYTAFGDLEV…KILAALKELQ (63 aa)).

As to quaternary structure, interacts with DDX4, PIWIL1, RANBP9 and TDRD1.

It localises to the cytoplasm. Functionally, plays a central role during spermatogenesis by repressing transposable elements and preventing their mobilization, which is essential for the germline integrity. Acts via the piRNA metabolic process, which mediates the repression of transposable elements during meiosis by forming complexes composed of piRNAs and Piwi proteins and governs the methylation and subsequent repression of transposons. Its association with pi-bodies suggests a participation in the primary piRNAs metabolic process. Required prior to the pachytene stage to facilitate the production of multiple types of piRNAs, including those associated with repeats involved in the regulation of retrotransposons. May act by mediating protein-protein interactions during germ cell maturation. This is Ankyrin repeat, SAM and basic leucine zipper domain-containing protein 1 (ASZ1) from Papio anubis (Olive baboon).